The sequence spans 1238 residues: MSILERLWDLLGLVFGSTFERVGSLATSVFGSANARQVAKLQESADRITAMEPKFAAMSDEELRDQTVLFRKRLREGETLDDIMEEAFAVCREGGKRFLGMRHYDVQLIGGMVLHSGAIGEMVTGEGKTLVATLPAYLNALEAKGVHVITVNDYLARRDMEWMAPLYMNLGLTVDAIQSGMSTSEKQAAYQCDITYGTNNEFGFDYLRDNMRPAAKGDDRFPSEVQQCQGPLNYAIIDEVDNILIDEARTPLIISGPADLDLGRYGEADRVARQLKKEEHFTVDEKQHNVTLTDEGVRAAEELAGVESFYTAGNMEWPHLIDNALKAHYLYKLDVNYVVKDKQVVIVDEFTGRLMDGRQWSDGLHQAVEAKEGVPIKQETQTFATASLQNIFKMYKKLSGMTGTAMTEADEFWKIYKLDVVAIPTHRGLQRIEHPDLIYLTEKDKFKAIADDVERTHKWDVVVLKDGTEIWGNIKSETDSVVELLPKGEKQTESFSHEKIVAIERAGRPVLVGTVSIEKSERLSALLERRGIKHDVLNAKQHGREADIVSQAGRIGAVTIATNMAGRGTDIILGGNPETLAWSQLQHKYPTRLEVPDAEWKALVDEIDERENMSAEGKIVREIGGLYVLGTERHESRRIDLQLRGRCGRQGDPGGSRFFLSLEDDLMRIFAGDFVKSMMERMGMKEGEAIESSLVTRRIAAAQKKVEERNFEIRKSLLEYDEVMDEQRKRVYRYRQNLLDGHSSREMLLTLIHNEIQSQVETFLDPNYGVDTFSTFAGGKLGCQLDARDFQNMDFEMADTYAKDQAERASEVTVAEAVEENLPESMEDEWNWKAMATWANTHLGTNYQDHQLKNKDREEMIDELIAHAHKQIEETDLSEGEPLLEADYGLRVLCAWMRHKFGIETTPEEFRDVEDRRKVTEELNRRAEAAYTEKEAEYPVLTGISRFTDKQGAQVSLDREGLVDWVHGRFNHELSVDEVKLNRDDLKVQLIQYSKQTASASGGMHAQAAEKVEDLFGRADADVTASLASGQSGKLEALATWLQEELGNRNTAEDLSRMNRAELTLAVNGAVDDKFHPEMRRMERQILLNIVDDSWKNHLLTMDHLRSSVGLKGYAQMDPKVEYKREGMRLFESMWDSIGERVTDLIFRMESFNDDFIRSTWVDARTRHDDAHEAGRSAQQAAQMESNTAAQRAAAGSEGRAEGSVDTVRVEEPRIGRNAPCPCGSGKKYKSCCMRRDG.

ATP-binding positions include Gln107, 125 to 129 (GEGKT), and Asp570. Positions 1194–1220 (AAGSEGRAEGSVDTVRVEEPRIGRNAP) are disordered. Residues 1199-1215 (GRAEGSVDTVRVEEPRI) show a composition bias toward basic and acidic residues. Residues Cys1221, Cys1223, Cys1232, and Cys1233 each coordinate Zn(2+).

The protein belongs to the SecA family. As to quaternary structure, monomer and homodimer. Part of the essential Sec protein translocation apparatus which comprises SecA, SecYEG and auxiliary proteins SecDF. Other proteins may also be involved. Zn(2+) serves as cofactor.

It is found in the cell inner membrane. The protein localises to the cytoplasm. The enzyme catalyses ATP + H2O + cellular proteinSide 1 = ADP + phosphate + cellular proteinSide 2.. Part of the Sec protein translocase complex. Interacts with the SecYEG preprotein conducting channel. Has a central role in coupling the hydrolysis of ATP to the transfer of proteins into and across the cell membrane, serving as an ATP-driven molecular motor driving the stepwise translocation of polypeptide chains across the membrane. The sequence is that of Protein translocase subunit SecA 1 from Rhodopirellula baltica (strain DSM 10527 / NCIMB 13988 / SH1).